A 156-amino-acid polypeptide reads, in one-letter code: MPRRRVIGQRKILPDPKFGSELLAKFVNILMVDGKKSTAEAIVYTALETLAQRSGKGHLEAFEVALDNVRPTVEVKSRRVGGSTYQVPVEVRPVRRNALAMRWIVEAARKRGDKSMALRLANELSDAAENKGTAVKKREDVHRMADANKAFAHYRW.

Belongs to the universal ribosomal protein uS7 family. Part of the 30S ribosomal subunit. Contacts proteins S9 and S11.

Its function is as follows. One of the primary rRNA binding proteins, it binds directly to 16S rRNA where it nucleates assembly of the head domain of the 30S subunit. Is located at the subunit interface close to the decoding center, probably blocks exit of the E-site tRNA. The polypeptide is Small ribosomal subunit protein uS7 (Sodalis glossinidius (strain morsitans)).